The sequence spans 436 residues: Protein PhoH2 (436 aa).

Residues 12–137 (RTYVLDTSVL…LVSKDLPMRL (126 aa)) form the PINc domain.

It in the N-terminal section; belongs to the PINc/VapC protein family. This sequence in the C-terminal section; belongs to the PhoH family.

It carries out the reaction n ATP + n H2O + wound RNA = n ADP + n phosphate + unwound RNA.. It catalyses the reaction ATP + H2O = ADP + phosphate + H(+). The enzyme catalyses GTP + H2O = GDP + phosphate + H(+). Unwinds and/or cleaves 5'-tailed RNA in vitro, the reaction is maximal with hydrolyzable ATP; double-stranded (ds)RNA and dsDNA are not unwound. Unlike the protein in mycobacteria there does not seem to be an antitoxin gene upstream, suggesting this is not a toxin-antitoxin system. Has ATPase and GTPase activities. The polypeptide is Protein PhoH2 (Thermobispora bispora (strain ATCC 19993 / DSM 43833 / CBS 139.67 / JCM 10125 / KCTC 9307 / NBRC 14880 / R51)).